Reading from the N-terminus, the 1225-residue chain is Chromosome-associated kinesin KIF4 (1225 aa).

The Kinesin motor domain occupies 9 to 338; that stretch reads IPVRVVRCRP…LRYADRARKI (330 aa). ATP is bound at residue 88-95; it reads GQTGSGKT. Positions 352–1003 form a coiled coil; that stretch reads ELNHLKQQVQ…LKQKMLLVQV (652 aa). Disordered stretches follow at residues 498–520, 717–744, and 1006–1047; these read QDAA…FTTQ, NKRL…GMEG, and GQKL…PTPE. Residues 507 to 520 show a composition bias toward polar residues; that stretch reads GQVTKRSSDDFTTQ. Positions 719–738 are enriched in basic and acidic residues; the sequence is RLKDALQKQREAADKRKESQ. The segment at 1004 to 1225 is globular; the sequence is ASGQKLRRDQ…GCTPIKEEID (222 aa).

This sequence belongs to the TRAFAC class myosin-kinesin ATPase superfamily. Kinesin family. Chromokinesin subfamily. It depends on [2Fe-2S] cluster as a cofactor. [4Fe-4S] cluster is required as a cofactor. In terms of tissue distribution, expressed in proliferating cells; neuroepithelium of embryos.

The protein resides in the nucleus. It localises to the chromosome. The protein localises to the cytoplasm. Its subcellular location is the cytoskeleton. Its function is as follows. Iron-sulfur (Fe-S) cluster binding motor protein that has a role in chromosome segregation during mitosis. Required for mitotic chromosomal positioning and bipolar spindle stabilization. This is Chromosome-associated kinesin KIF4 (KIF4) from Gallus gallus (Chicken).